The following is a 262-amino-acid chain: Small ribosomal subunit protein eS1 (262 aa).

The protein belongs to the eukaryotic ribosomal protein eS1 family. In terms of assembly, component of the small ribosomal subunit. Mature ribosomes consist of a small (40S) and a large (60S) subunit. The 40S subunit contains about 33 different proteins and 1 molecule of RNA (18S). The 60S subunit contains about 49 different proteins and 3 molecules of RNA (25S, 5.8S and 5S).

The protein resides in the cytoplasm. In Theileria annulata, this protein is Small ribosomal subunit protein eS1.